The sequence spans 152 residues: Ribosome maturation factor RimP (152 aa).

Belongs to the RimP family.

Its subcellular location is the cytoplasm. Required for maturation of 30S ribosomal subunits. The chain is Ribosome maturation factor RimP from Desulfitobacterium hafniense (strain DSM 10664 / DCB-2).